The following is a 434-amino-acid chain: Ribitol-5-phosphate xylosyltransferase 1 (434 aa).

Residues 1-7 (MRFFRRK) are Cytoplasmic-facing. Residues 8 to 28 (IAIIVILAYAIFSLYAAYNVF) traverse the membrane as a helical; Signal-anchor for type II membrane protein segment. At 29–434 (FSKRVISRVH…VLEENFFKIT (406 aa)) the chain is on the extracellular side.

This sequence belongs to the TMEM5 family.

The protein localises to the golgi apparatus membrane. The catalysed reaction is 3-O-[Rib-ol-P-Rib-ol-P-3-beta-D-GalNAc-(1-&gt;3)-beta-D-GlcNAc-(1-&gt;4)-(O-6-P-alpha-D-Man)]-Thr-[protein] + UDP-alpha-D-xylose = 3-O-[beta-D-Xyl-(1-&gt;4)-Rib-ol-P-Rib-ol-P-3-beta-D-GalNAc-(1-&gt;3)-beta-D-GlcNAc-(1-&gt;4)-(O-6-P-alpha-D-Man)]-Thr-[protein] + UDP + H(+). The protein operates within protein modification; protein glycosylation. Its function is as follows. Acts as a UDP-D-xylose:ribitol-5-phosphate beta1,4-xylosyltransferase, which catalyzes the transfer of UDP-D-xylose to ribitol 5-phosphate (Rbo5P) to form the Xylbeta1-4Rbo5P linkage on O-mannosyl glycan. Participates in the biosynthesis of the phosphorylated O-mannosyl trisaccharide (N-acetylgalactosamine-beta-3-N-acetylglucosamine-beta-4-(phosphate-6-)mannose), a carbohydrate structure present in alpha-dystroglycan (DAG1), which is required for binding laminin G-like domain-containing extracellular proteins with high affinity. The polypeptide is Ribitol-5-phosphate xylosyltransferase 1 (rxylt1) (Danio rerio (Zebrafish)).